A 218-amino-acid polypeptide reads, in one-letter code: tRNA (guanine-N(7)-)-methyltransferase (218 aa).

S-adenosyl-L-methionine-binding residues include E46, E71, D98, and D120. D120 is an active-site residue. K124 contributes to the substrate binding site. Residues 126–131 are interaction with RNA; that stretch reads RHEKRR. Substrate contacts are provided by residues D156 and 196 to 199; that span reads TEYE.

It belongs to the class I-like SAM-binding methyltransferase superfamily. TrmB family.

The catalysed reaction is guanosine(46) in tRNA + S-adenosyl-L-methionine = N(7)-methylguanosine(46) in tRNA + S-adenosyl-L-homocysteine. It functions in the pathway tRNA modification; N(7)-methylguanine-tRNA biosynthesis. Its function is as follows. Catalyzes the formation of N(7)-methylguanine at position 46 (m7G46) in tRNA. This Lactobacillus johnsonii (strain CNCM I-12250 / La1 / NCC 533) protein is tRNA (guanine-N(7)-)-methyltransferase.